The chain runs to 383 residues: Putative F-box protein At1g77650 (383 aa).

The F-box domain maps to Met1 to Leu47.

This is Putative F-box protein At1g77650 from Arabidopsis thaliana (Mouse-ear cress).